Reading from the N-terminus, the 173-residue chain is NADH-ubiquinone oxidoreductase chain 6 (173 aa).

A run of 5 helical transmembrane segments spans residues 1 to 21, 27 to 47, 48 to 68, 87 to 107, and 139 to 159; these read MTYF…AVAS, YGVV…LSLG, VSFV…VVFV, VVGY…IGGF, and CGVG…FVVL.

This sequence belongs to the complex I subunit 6 family.

The protein resides in the mitochondrion membrane. It catalyses the reaction a ubiquinone + NADH + 5 H(+)(in) = a ubiquinol + NAD(+) + 4 H(+)(out). In terms of biological role, core subunit of the mitochondrial membrane respiratory chain NADH dehydrogenase (Complex I) that is believed to belong to the minimal assembly required for catalysis. Complex I functions in the transfer of electrons from NADH to the respiratory chain. The immediate electron acceptor for the enzyme is believed to be ubiquinone. The chain is NADH-ubiquinone oxidoreductase chain 6 (MT-ND6) from Cepphus columba (Pigeon guillemot).